The following is a 169-amino-acid chain: Oleosin Ara h 10.0101 (169 aa).

2 helical membrane-spanning segments follow: residues 39–59 and 73–93; these read VIAV…AGLA and LFIL…LSVA. Residues 146–156 are compositionally biased toward basic and acidic residues; that stretch reads KDVGQKTKEVG. The tract at residues 146-169 is disordered; that stretch reads KDVGQKTKEVGQEIQTKAQDSKRT.

Belongs to the oleosin family. As to expression, expressed in seeds (at protein level).

The protein resides in the lipid droplet. It is found in the membrane. May have a structural role to stabilize the lipid body during desiccation of the seed by preventing coalescence of the oil. Probably interacts with both lipid and phospholipid moieties of lipid bodies. May also provide recognition signals for specific lipase anchorage in lipolysis during seedling growth. The protein is Oleosin Ara h 10.0101 of Arachis hypogaea (Peanut).